The primary structure comprises 347 residues: Phenylalanine--tRNA ligase alpha subunit (347 aa).

Residue E259 participates in Mg(2+) binding.

It belongs to the class-II aminoacyl-tRNA synthetase family. Phe-tRNA synthetase alpha subunit type 1 subfamily. As to quaternary structure, tetramer of two alpha and two beta subunits. Requires Mg(2+) as cofactor.

It is found in the cytoplasm. It catalyses the reaction tRNA(Phe) + L-phenylalanine + ATP = L-phenylalanyl-tRNA(Phe) + AMP + diphosphate + H(+). The protein is Phenylalanine--tRNA ligase alpha subunit of Oenococcus oeni (strain ATCC BAA-331 / PSU-1).